Consider the following 224-residue polypeptide: Large ribosomal subunit protein bL25 (224 aa).

The segment at 195-224 (TVEEVDEAAEVDAADVPATEQGTDESKDGE) is disordered. The segment covering 197–207 (EEVDEAAEVDA) has biased composition (acidic residues).

The protein belongs to the bacterial ribosomal protein bL25 family. CTC subfamily. In terms of assembly, part of the 50S ribosomal subunit; part of the 5S rRNA/L5/L18/L25 subcomplex. Contacts the 5S rRNA. Binds to the 5S rRNA independently of L5 and L18.

Functionally, this is one of the proteins that binds to the 5S RNA in the ribosome where it forms part of the central protuberance. In Psychrobacter cryohalolentis (strain ATCC BAA-1226 / DSM 17306 / VKM B-2378 / K5), this protein is Large ribosomal subunit protein bL25.